The chain runs to 527 residues: Serine/threonine-protein kinase CHK1 (527 aa).

Residues valine 15 to valine 281 enclose the Protein kinase domain. Residues valine 21–valine 29 and lysine 45 each bind ATP. Aspartate 142 functions as the Proton acceptor in the catalytic mechanism.

The protein belongs to the protein kinase superfamily. CAMK Ser/Thr protein kinase family. NIM1 subfamily.

The protein resides in the nucleus. It carries out the reaction L-seryl-[protein] + ATP = O-phospho-L-seryl-[protein] + ADP + H(+). The enzyme catalyses L-threonyl-[protein] + ATP = O-phospho-L-threonyl-[protein] + ADP + H(+). In terms of biological role, serine/threonine-protein kinase which is required for checkpoint-mediated cell cycle arrest and activation of DNA repair in response to the presence of DNA damage or unreplicated DNA. May also negatively regulate cell cycle progression during unperturbed cell cycles. Controls phosphorylation and abundance of PDS1 to prevent anaphase entry. Also helps prevent mitotic exit. The sequence is that of Serine/threonine-protein kinase CHK1 (CHK1) from Saccharomyces cerevisiae (strain ATCC 204508 / S288c) (Baker's yeast).